A 305-amino-acid polypeptide reads, in one-letter code: Probable cell division protein WhiA (305 aa).

The segment at residues 272-305 (SIQQLADSLTVPITKSGVNHRLRKINKIADELTD) is a DNA-binding region (H-T-H motif).

This sequence belongs to the WhiA family.

Its function is as follows. Involved in cell division and chromosome segregation. This Streptococcus suis (strain 98HAH33) protein is Probable cell division protein WhiA.